Here is a 241-residue protein sequence, read N- to C-terminus: DnaA regulatory inactivator Hda (241 aa).

This sequence belongs to the DnaA family. HdA subfamily. As to quaternary structure, the active form seems to be an ADP-bound monomer. Forms the RIDA complex (regulatory inactivation of DnaA) of ATP-DnaA, ADP-Hda and the DNA-loaded beta sliding clamp (dnaN).

In terms of biological role, mediates the interaction of DNA replication initiator protein DnaA with DNA polymerase subunit beta sliding clamp (dnaN). Stimulates hydrolysis of ATP-DnaA to ADP-DnaA, rendering DnaA inactive for reinitiation, a process called regulatory inhibition of DnaA or RIDA. This Salmonella arizonae (strain ATCC BAA-731 / CDC346-86 / RSK2980) protein is DnaA regulatory inactivator Hda.